A 338-amino-acid polypeptide reads, in one-letter code: MLSALARPAGAALRRSFSTSAQNNAKVAVLGASGGIGQPLSLLLKNSPLVSRLTLYDIAHTPGVAADLSHIETRANVKGYLGPEQLPDCLKGCDVVVIPAGVPRKPGMTRDDLFNTNATIVATLTAACAQHCPEAMVCIIANPVNSTIPITAEVFKKHGVYNPNKIFGVTTLDIVRANTFVAELKGLDPARVNVPVIGGHAGKTIIPLISQCTPKVDFPQDQLATLTGRIQEAGTEVVKAKAGAGSATLSMAYAGARFVFSLVDAMNGKEGVVECSFVQSKETECTYFSTPLLLGKKGLEKNLGIGKITPFEEKMIAEAIPELKASIKKGEDFVKNMK.

The transit peptide at 1–24 directs the protein to the mitochondrion; the sequence is MLSALARPAGAALRRSFSTSAQNN. NAD(+)-binding positions include 31-37 and Asp57; that span reads GASGGIG. Ser33 carries an O-linked (GlcNAc) serine glycan. Lys78 and Lys91 each carry N6-acetyllysine; alternate. Residues Lys78 and Lys91 each carry the N6-succinyllysine; alternate modification. Substrate contacts are provided by Arg104 and Arg110. Residues Asn117 and 140–142 contribute to the NAD(+) site; that span reads IAN. Asn142 provides a ligand contact to substrate. The residue at position 165 (Lys165) is an N6-acetyllysine. A substrate-binding site is contributed by Arg176. At Lys185 the chain carries N6-acetyllysine; alternate. Residue Lys185 is modified to N6-succinyllysine; alternate. The active-site Proton acceptor is the His200. Lys203 carries the post-translational modification N6-succinyllysine. Lys215 and Lys239 each carry N6-acetyllysine; alternate. N6-succinyllysine; alternate is present on residues Lys215 and Lys239. Position 239 is an N6-malonyllysine; alternate (Lys239). Ser246 carries the post-translational modification Phosphoserine. Met251 contributes to the NAD(+) binding site. N6-succinyllysine is present on Lys269. Residues Lys296, Lys301, and Lys307 each carry the N6-acetyllysine; alternate modification. Lys296, Lys301, and Lys307 each carry N6-succinyllysine; alternate. Position 307 is an N6-malonyllysine; alternate (Lys307). Position 309 is a phosphothreonine (Thr309). N6-acetyllysine; alternate is present on residues Lys314 and Lys324. N6-succinyllysine; alternate is present on residues Lys314 and Lys324. Ser326 is modified (phosphoserine). Residues Lys328, Lys329, and Lys335 each carry the N6-acetyllysine; alternate modification. Residue Lys328 is modified to N6-succinyllysine; alternate. Position 329 is an N6-malonyllysine; alternate (Lys329). Lys335 bears the N6-succinyllysine; alternate mark.

Belongs to the LDH/MDH superfamily. MDH type 1 family. Homodimer. Acetylation is enhanced after treatment either with trichostin A (TCA) or with nicotinamide (NAM) with the appearance of tri- and tetraacetylations. Glucose also increases acetylation. Acetylation of Lys-239 and Lys-314 is observed in liver mitochondria from fasted mice but not from fed mice.

The protein localises to the mitochondrion matrix. The catalysed reaction is (S)-malate + NAD(+) = oxaloacetate + NADH + H(+). Its activity is regulated as follows. Enzyme activity is enhanced by acetylation. The protein is Malate dehydrogenase, mitochondrial (Mdh2) of Mus musculus (Mouse).